A 287-amino-acid chain; its full sequence is Ribosomal RNA small subunit methyltransferase I (287 aa).

Belongs to the methyltransferase superfamily. RsmI family.

The protein localises to the cytoplasm. It carries out the reaction cytidine(1402) in 16S rRNA + S-adenosyl-L-methionine = 2'-O-methylcytidine(1402) in 16S rRNA + S-adenosyl-L-homocysteine + H(+). Catalyzes the 2'-O-methylation of the ribose of cytidine 1402 (C1402) in 16S rRNA. This Streptococcus pyogenes serotype M18 (strain MGAS8232) protein is Ribosomal RNA small subunit methyltransferase I.